The following is a 693-amino-acid chain: Periplasmic alpha-galactoside-binding protein (693 aa).

Residues 1 to 20 form the signal peptide; the sequence is MKTHRLNMTASLLIGISAFA.

This sequence belongs to the bacterial solute-binding protein 5 family.

The protein resides in the periplasm. Involved in the transport of alpha-galactosides. Required for the utilization of raffinose and melibiose. Probably acts as a periplasmic substrate-binding protein for a transport system. This Rhizobium meliloti (strain 1021) (Ensifer meliloti) protein is Periplasmic alpha-galactoside-binding protein.